The chain runs to 86 residues: Large ribosomal subunit protein uL30m (86 aa).

The tract at residues 67 to 86 is disordered; it reads QQRELRKSNPGFIVEKRTID.

It belongs to the universal ribosomal protein uL30 family. In terms of assembly, component of the mitochondrial large ribosomal subunit (mt-LSU). Mature yeast 74S mitochondrial ribosomes consist of a small (37S) and a large (54S) subunit. The 37S small subunit contains a 15S ribosomal RNA (15S mt-rRNA) and 34 different proteins. The 54S large subunit contains a 21S rRNA (21S mt-rRNA) and 46 different proteins.

Its subcellular location is the mitochondrion. Component of the mitochondrial ribosome (mitoribosome), a dedicated translation machinery responsible for the synthesis of mitochondrial genome-encoded proteins, including at least some of the essential transmembrane subunits of the mitochondrial respiratory chain. The mitoribosomes are attached to the mitochondrial inner membrane and translation products are cotranslationally integrated into the membrane. This Saccharomyces cerevisiae (strain ATCC 204508 / S288c) (Baker's yeast) protein is Large ribosomal subunit protein uL30m (MRPL33).